Here is a 1368-residue protein sequence, read N- to C-terminus: DNA-directed RNA polymerase subunit beta (1368 aa).

The protein belongs to the RNA polymerase beta chain family. The RNAP catalytic core consists of 2 alpha, 1 beta, 1 beta' and 1 omega subunit. When a sigma factor is associated with the core the holoenzyme is formed, which can initiate transcription.

It carries out the reaction RNA(n) + a ribonucleoside 5'-triphosphate = RNA(n+1) + diphosphate. Functionally, DNA-dependent RNA polymerase catalyzes the transcription of DNA into RNA using the four ribonucleoside triphosphates as substrates. The polypeptide is DNA-directed RNA polymerase subunit beta (Legionella pneumophila (strain Corby)).